The primary structure comprises 330 residues: Phosphate acyltransferase (330 aa).

The protein belongs to the PlsX family. Homodimer. Probably interacts with PlsY.

The protein resides in the cytoplasm. It catalyses the reaction a fatty acyl-[ACP] + phosphate = an acyl phosphate + holo-[ACP]. It participates in lipid metabolism; phospholipid metabolism. Functionally, catalyzes the reversible formation of acyl-phosphate (acyl-PO(4)) from acyl-[acyl-carrier-protein] (acyl-ACP). This enzyme utilizes acyl-ACP as fatty acyl donor, but not acyl-CoA. The polypeptide is Phosphate acyltransferase (Streptococcus pneumoniae (strain JJA)).